Consider the following 77-residue polypeptide: MAVGTTPGELRELTDDELKDKLRESKEELFNLRFQMATGQLSNNRRLRTVRQEIARVYTVLRERELGLASGPAGEES.

Belongs to the universal ribosomal protein uL29 family.

The chain is Large ribosomal subunit protein uL29 from Mycolicibacterium smegmatis (strain ATCC 700084 / mc(2)155) (Mycobacterium smegmatis).